The primary structure comprises 508 residues: Glycerol kinase (508 aa).

Thr15 is an ADP binding site. Residues Thr15, Ser16, and Ser17 each contribute to the ATP site. Position 15 (Thr15) interacts with sn-glycerol 3-phosphate. Arg19 is an ADP binding site. Sn-glycerol 3-phosphate-binding residues include Arg85, Glu86, Tyr138, and Asp251. Glycerol-binding residues include Arg85, Glu86, Tyr138, Asp251, and Gln252. Residues Thr273, Gly317, and Gly419 each coordinate ADP. Thr273, Gly317, and Gly419 together coordinate ATP.

Belongs to the FGGY kinase family.

The catalysed reaction is glycerol + ATP = sn-glycerol 3-phosphate + ADP + H(+). The protein operates within polyol metabolism; glycerol degradation via glycerol kinase pathway; sn-glycerol 3-phosphate from glycerol: step 1/1. With respect to regulation, inhibited by fructose 1,6-bisphosphate (FBP). In terms of biological role, key enzyme in the regulation of glycerol uptake and metabolism. Catalyzes the phosphorylation of glycerol to yield sn-glycerol 3-phosphate. In Mycoplasma pneumoniae (strain ATCC 29342 / M129 / Subtype 1) (Mycoplasmoides pneumoniae), this protein is Glycerol kinase.